Consider the following 146-residue polypeptide: Hemoglobin cathodic subunit beta (146 aa).

In terms of domain architecture, Globin spans 2–146 (HFSDAERDAI…VAAALSSRYF (145 aa)). Heme b-binding residues include His-63 and His-92.

It belongs to the globin family. As to quaternary structure, heterotetramer of two alpha chains and two beta chains. As to expression, red blood cells.

Its function is as follows. Involved in oxygen transport from gills to the various peripheral tissues. This is Hemoglobin cathodic subunit beta (hbb) from Hoplosternum littorale (Hassar).